The primary structure comprises 693 residues: FAST kinase domain-containing protein 2, mitochondrial (693 aa).

Phosphoserine is present on residues Ser110 and Ser124. One can recognise an RAP domain in the interval 618 to 675 (VAVLCVSRSAYCLGSSHPRGFLAMKMRHLNAMGFRVILVNNWEMDKLEMEDAVTFLKT). Ser692 is subject to Phosphoserine.

The protein belongs to the FAST kinase family. In terms of assembly, monomer. Found in a complex with GRSF1, DDX28, DHX30 and FASTKD5. Associates with the 16S mitochondrial rRNA (16S mt-rRNA). Forms a regulatory protein-RNA complex, consisting of RCC1L, NGRN, RPUSD3, RPUSD4, TRUB2, FASTKD2 and 16S mt-rRNA.

The protein localises to the mitochondrion matrix. It localises to the mitochondrion nucleoid. Functionally, plays an important role in assembly of the mitochondrial large ribosomal subunit. As a component of a functional protein-RNA module, consisting of RCC1L, NGRN, RPUSD3, RPUSD4, TRUB2, FASTKD2 and 16S mitochondrial ribosomal RNA (16S mt-rRNA), controls 16S mt-rRNA abundance and is required for intra-mitochondrial translation. May play a role in mitochondrial apoptosis. The protein is FAST kinase domain-containing protein 2, mitochondrial (FASTKD2) of Pongo abelii (Sumatran orangutan).